The primary structure comprises 597 residues: NADPH-dependent diflavin oxidoreductase 1 (597 aa).

Residues 6-150 (LLVLFGSQTG…AVDPWLRDLW (145 aa)) form the Flavodoxin-like domain. Residues 12 to 17 (SQTGTA), 59 to 62 (ATTG), 97 to 106 (LGDSSYAKFN), and D132 contribute to the FMN site. The interval 188 to 207 (GSEGQRVAHPGSQEPPSESK) is disordered. Residues 206 to 447 (SKPFLAPMIS…VRPGSLAFPE (242 aa)) enclose the FAD-binding FR-type domain. Residues R350, 382 to 385 (RAFS), and 416 to 419 (GLCS) each bind FAD. NADP(+)-binding positions include T460, 515-516 (SR), 521-525 (KVYVQ), and D558. W596 contributes to the FAD binding site.

This sequence belongs to the NADPH-dependent diflavin oxidoreductase NDOR1 family. In the N-terminal section; belongs to the flavodoxin family. It in the C-terminal section; belongs to the flavoprotein pyridine nucleotide cytochrome reductase family. As to quaternary structure, interacts with CIAPIN1; as part of the cytosolic iron-sulfur (Fe-S) protein assembly (CIA) machinery. Interacts with DCPS. It depends on FAD as a cofactor. FMN is required as a cofactor. As to expression, low expression in brain, heart, kidney, pancreas, prostate and skeletal muscle. Highest levels in the placenta. Expressed in cancer cell lines including promyelocytic leukemia, HeLaS3, chronic myelagenous leukemia, lymphoblastic leukemia, Burkitt's lymphoma, colorectal adenocarcinoma, lung carcinoma, and melanoma G-361.

The protein resides in the cytoplasm. It is found in the perinuclear region. It catalyses the reaction 2 oxidized [2Fe-2S]-[protein] + NADPH = 2 reduced [2Fe-2S]-[protein] + NADP(+) + H(+). Its function is as follows. NADPH-dependent reductase which is a central component of the cytosolic iron-sulfur (Fe-S) protein assembly (CIA) machinery. Transfers electrons from NADPH via its FAD and FMN prosthetic groups to the [2Fe-2S] cluster of CIAPIN1, another key component of the CIA machinery. In turn, this reduced cluster provides electrons for assembly of cytosolic iron-sulfur cluster proteins. It can also reduce the [2Fe-2S] cluster of CISD1 and activate this protein implicated in Fe/S cluster repair. In vitro can fully activate methionine synthase/MTR in the presence of soluble cytochrome b5/CYB5A. This Homo sapiens (Human) protein is NADPH-dependent diflavin oxidoreductase 1.